A 369-amino-acid chain; its full sequence is Maltose/maltodextrin import ATP-binding protein MalK (369 aa).

The region spanning 4–234 (VTLSSVYKAF…PANRFVAGFI (231 aa)) is the ABC transporter domain. Residue 36–43 (GPSGCGKS) coordinates ATP.

The protein belongs to the ABC transporter superfamily. Maltooligosaccharide importer (TC 3.A.1.1.1) family. The complex is composed of two ATP-binding proteins (MalK), two transmembrane proteins (MalG and MalK) and a solute-binding protein (MalE).

It is found in the cell inner membrane. It catalyses the reaction D-maltose(out) + ATP + H2O = D-maltose(in) + ADP + phosphate + H(+). In terms of biological role, part of the ABC transporter complex MalEFGK involved in maltose/maltodextrin import. Responsible for energy coupling to the transport system. The chain is Maltose/maltodextrin import ATP-binding protein MalK from Yersinia pestis bv. Antiqua (strain Antiqua).